Consider the following 117-residue polypeptide: Large ribosomal subunit protein bL20 (117 aa).

It belongs to the bacterial ribosomal protein bL20 family.

Its function is as follows. Binds directly to 23S ribosomal RNA and is necessary for the in vitro assembly process of the 50S ribosomal subunit. It is not involved in the protein synthesizing functions of that subunit. This chain is Large ribosomal subunit protein bL20, found in Streptococcus suis (strain 05ZYH33).